The sequence spans 203 residues: MELKQSLSVHLEAEKPLRRYGAVEETAWKAEGLGSQLDIISMAETSMMPEEIELEMAKIQRLREVLVRRESELRFMMDDIQLCKDIMDLKQELQNLVAIPEKEKTKLQKQREDELIQKIHRLVQKRDFLVDDAEVERLREQEEDKEMADFLRIKLKPLDKVTKTSASSRAEKKAEPPPSKPTVAKTGLALIKDCCGTTQCNIM.

A bMERB domain is found at 3 to 149; sequence LKQSLSVHLE…EQEEDKEMAD (147 aa). Residues 161–184 are disordered; the sequence is VTKTSASSRAEKKAEPPPSKPTVA.

This Mus musculus (Mouse) protein is bMERB domain-containing protein 1 (Bmerb1).